The sequence spans 1041 residues: Importin-9 (1041 aa).

Ala2 bears the N-acetylalanine mark. An Importin N-terminal domain is found at Ala43–Glu119. Positions Gln936–Gly967 are disordered. Residues Asn943–Gly964 show a composition bias toward acidic residues.

The protein belongs to the importin beta family. Interacts with histones H2A, H2B, H3 and H4. The binding is coupled to RanGTP cycles. Interacts with AKIRIN2; promoting association with pre-assembled proteasomes. Associates with pre-assembled proteasomes; interaction is indirect and mediated via interaction with AKIRIN2. Interacts with PPP2R1A and PPP2R1B.

Its subcellular location is the cytoplasm. The protein localises to the nucleus. In terms of biological role, nuclear transport receptor that mediates nuclear import of proteins, such as histones, proteasome and actin. Serves as receptor for nuclear localization signals (NLS) in cargo substrates. Is thought to mediate docking of the importin/substrate complex to the nuclear pore complex (NPC) through binding to nucleoporin and the complex is subsequently translocated through the pore by an energy requiring, Ran-dependent mechanism. At the nucleoplasmic side of the NPC, Ran binds to the importin, the importin/substrate complex dissociates and importin is re-exported from the nucleus to the cytoplasm where GTP hydrolysis releases Ran. The directionality of nuclear import is thought to be conferred by an asymmetric distribution of the GTP- and GDP-bound forms of Ran between the cytoplasm and nucleus. Mediates the import of pre-assembled proteasomes into the nucleus; AKIRIN2 acts as a molecular bridge between IPO9 and the proteasome complex. Mediates the nuclear import of histones H2A, H2B, H4 and H4. In addition to nuclear import, also acts as a chaperone for histones by preventing inappropriate non-nucleosomal interactions. Mediates the nuclear import of actin. In Mus musculus (Mouse), this protein is Importin-9.